The sequence spans 965 residues: Phosphatidylethanolamine N-methyltransferase (965 aa).

The disordered stretch occupies residues 1 to 55 (MSSSAADPFAARLNSDVRQRHPTASATSKNVEGTSQQKQQQQQQQSEANAAASRV). Topologically, residues 1–91 (MSSSAADPFA…DPREPKNLSD (91 aa)) are lumenal. A compositionally biased stretch (polar residues) spans 22-35 (PTASATSKNVEGTS). Positions 36–45 (QQKQQQQQQQ) are enriched in low complexity. The chain crosses the membrane as a helical span at residues 92–112 (VAVLAIIALHFLAAYYLPWGV). The Cytoplasmic portion of the chain corresponds to 113–115 (KRP). A helical membrane pass occupies residues 116 to 136 (LFAAIFMFWRLAYNVGIGYLL). Residues 137 to 201 (TIQSKYKLLV…EYNTWLTFRR (65 aa)) are Lumenal-facing. A helical membrane pass occupies residues 202–222 (VVDLILMCDFISYCLFAIVCA). Residues 223–229 (HKPDGEG) lie on the Cytoplasmic side of the membrane. The chain crosses the membrane as a helical span at residues 230 to 250 (LFMCFARWAAGITLVGFNLWV). Residues 251 to 279 (KLDAHRVVKDYAWYWGDFFYLIEQELTFD) are Lumenal-facing. A helical transmembrane segment spans residues 280-300 (GVFELAPHPMYSIGYAGYYGI). The Cytoplasmic portion of the chain corresponds to 301–306 (SMMAAS). A helical membrane pass occupies residues 307–327 (YDVLFISIIAHAAQFAFLVIV). Residues 328-389 (ENPHIEKTYN…IGLKNLDFFR (62 aa)) are Lumenal-facing. The chain crosses the membrane as a helical span at residues 390–410 (ITDVAIVLLCAYLAVVTMVTP). The Cytoplasmic segment spans residues 411–417 (NTRFYQA). Residues 418 to 438 (LFVLHALAWRLWYSAGLGVIL) traverse the membrane as a helical segment. Topologically, residues 439–467 (TMQSEEKMFTRHFLKYGESVGEAWRQWKG) are lumenal. A helical membrane pass occupies residues 468–488 (IYHLSNCLCHASFIAASYKMY). Residues 489-496 (EFPADWTY) are Cytoplasmic-facing. Residues 497–517 (GWALLKHVVGLSLIALQVWTA) traverse the membrane as a helical segment. Topologically, residues 518–573 (TSIYESLGEFGWFYGDFFFDSKRQLTYTSIYRFLNNPERVFGTAGLWGAALITWSR) are lumenal. Residues 574–594 (AIFLMALAGHFLTLAFLAYVE) traverse the membrane as a helical segment. Topologically, residues 595–965 (KPHMQKVYGR…TTPVDSKFSE (371 aa)) are cytoplasmic.

Belongs to the class VI-like SAM-binding methyltransferase superfamily. CHO2 family.

Its subcellular location is the endoplasmic reticulum membrane. The enzyme catalyses a 1,2-diacyl-sn-glycero-3-phosphoethanolamine + S-adenosyl-L-methionine = a 1,2-diacyl-sn-glycero-3-phospho-N-methylethanolamine + S-adenosyl-L-homocysteine + H(+). Its pathway is phospholipid metabolism; phosphatidylcholine biosynthesis. Its function is as follows. Catalyzes the first step of the methylation pathway of phosphatidylcholine biosynthesis, the SAM-dependent methylation of phosphatidylethanolamine (PE) to phosphatidylmonomethylethanolamine (PMME). This is Phosphatidylethanolamine N-methyltransferase from Neurospora crassa (strain ATCC 24698 / 74-OR23-1A / CBS 708.71 / DSM 1257 / FGSC 987).